The primary structure comprises 263 residues: Ribonuclease HII (263 aa).

The region spanning 71–262 is the RNase H type-2 domain; sequence QAIAGIDEVG…VKSMCCNSTN (192 aa). Residues D77, E78, and D172 each contribute to the a divalent metal cation site.

The protein belongs to the RNase HII family. Mn(2+) is required as a cofactor. Requires Mg(2+) as cofactor.

The protein resides in the cytoplasm. It catalyses the reaction Endonucleolytic cleavage to 5'-phosphomonoester.. Endonuclease that specifically degrades the RNA of RNA-DNA hybrids. The polypeptide is Ribonuclease HII (Streptococcus pyogenes serotype M2 (strain MGAS10270)).